Reading from the N-terminus, the 149-residue chain is Sec-independent protein translocase protein TatB (149 aa).

The chain crosses the membrane as a helical span at residues 1 to 21 (MFDIGFTELIVIGIVALVVVG). A disordered region spans residues 92–149 (VDMLDKSVRNEPQNAQTPPQTADAEPAQPDVRQQTLPLEEPDQNRAAGEPSSTSTRPA). Residues 101–111 (NEPQNAQTPPQ) show a composition bias toward polar residues.

Belongs to the TatB family. In terms of assembly, the Tat system comprises two distinct complexes: a TatABC complex, containing multiple copies of TatA, TatB and TatC subunits, and a separate TatA complex, containing only TatA subunits. Substrates initially bind to the TatABC complex, which probably triggers association of the separate TatA complex to form the active translocon.

The protein resides in the cell inner membrane. Part of the twin-arginine translocation (Tat) system that transports large folded proteins containing a characteristic twin-arginine motif in their signal peptide across membranes. Together with TatC, TatB is part of a receptor directly interacting with Tat signal peptides. TatB may form an oligomeric binding site that transiently accommodates folded Tat precursor proteins before their translocation. The protein is Sec-independent protein translocase protein TatB of Thiobacillus denitrificans (strain ATCC 25259 / T1).